The sequence spans 181 residues: MSSEIKIVNVVVSTKIGDDIDLEYVADVLDNSEYEPEQFPGLVCRLSDPKVALLIFRSGKLNCTGAKSKEDAVIAINKVMEYLREAGLDLIDTPEVKVQNMVATAELGMEPNLDDLSTLERTEYEPEQFPGLVYRMESPKVVLLVFGSGKVVITGLKNKEDAYIALEKIKNTVKELEEEYF.

Repeat copies occupy residues 7-83 (IVNV…MEYL) and 98-173 (VQNM…KNTV).

The protein belongs to the TBP family.

Functionally, general factor that plays a role in the activation of archaeal genes transcribed by RNA polymerase. Binds specifically to the TATA box promoter element which lies close to the position of transcription initiation. The protein is TATA-box-binding protein of Methanococcus aeolicus (strain ATCC BAA-1280 / DSM 17508 / OCM 812 / Nankai-3).